Reading from the N-terminus, the 473-residue chain is Cysteine--tRNA ligase (473 aa).

C27 contributes to the Zn(2+) binding site. Residues I29–H39 carry the 'HIGH' region motif. Zn(2+) is bound by residues C213, H238, and E242. The short motif at K271–S275 is the 'KMSKS' region element. K274 contributes to the ATP binding site.

It belongs to the class-I aminoacyl-tRNA synthetase family. Zn(2+) is required as a cofactor.

Its subcellular location is the cytoplasm. The catalysed reaction is tRNA(Cys) + L-cysteine + ATP = L-cysteinyl-tRNA(Cys) + AMP + diphosphate. This is Cysteine--tRNA ligase from Pyrobaculum islandicum (strain DSM 4184 / JCM 9189 / GEO3).